The following is a 413-amino-acid chain: Serine hydroxymethyltransferase (413 aa).

Residues Leu117 and 121–123 (GHL) contribute to the (6S)-5,6,7,8-tetrahydrofolate site. Lys226 is modified (N6-(pyridoxal phosphate)lysine). (6S)-5,6,7,8-tetrahydrofolate is bound by residues Glu239 and 349-351 (SPF).

It belongs to the SHMT family. In terms of assembly, homodimer. Requires pyridoxal 5'-phosphate as cofactor.

It localises to the cytoplasm. It carries out the reaction (6R)-5,10-methylene-5,6,7,8-tetrahydrofolate + glycine + H2O = (6S)-5,6,7,8-tetrahydrofolate + L-serine. It participates in one-carbon metabolism; tetrahydrofolate interconversion. It functions in the pathway amino-acid biosynthesis; glycine biosynthesis; glycine from L-serine: step 1/1. Catalyzes the reversible interconversion of serine and glycine with tetrahydrofolate (THF) serving as the one-carbon carrier. This reaction serves as the major source of one-carbon groups required for the biosynthesis of purines, thymidylate, methionine, and other important biomolecules. Also exhibits THF-independent aldolase activity toward beta-hydroxyamino acids, producing glycine and aldehydes, via a retro-aldol mechanism. This is Serine hydroxymethyltransferase from Bacillus anthracis (strain A0248).